The primary structure comprises 229 residues: Endonuclease V (229 aa).

Aspartate 46 and aspartate 114 together coordinate Mg(2+).

It belongs to the endonuclease V family. The cofactor is Mg(2+).

It is found in the cytoplasm. It catalyses the reaction Endonucleolytic cleavage at apurinic or apyrimidinic sites to products with a 5'-phosphate.. Its function is as follows. DNA repair enzyme involved in the repair of deaminated bases. Selectively cleaves double-stranded DNA at the second phosphodiester bond 3' to a deoxyinosine leaving behind the intact lesion on the nicked DNA. This is Endonuclease V from Streptomyces avermitilis (strain ATCC 31267 / DSM 46492 / JCM 5070 / NBRC 14893 / NCIMB 12804 / NRRL 8165 / MA-4680).